The following is a 62-amino-acid chain: Large ribosomal subunit protein bL28 (62 aa).

Residues 1-27 are disordered; the sequence is MARECYITGRKARSGNKRSHAMNKSKR. Basic residues predominate over residues 10–27; the sequence is RKARSGNKRSHAMNKSKR.

It belongs to the bacterial ribosomal protein bL28 family.

The chain is Large ribosomal subunit protein bL28 from Shouchella clausii (strain KSM-K16) (Alkalihalobacillus clausii).